A 90-amino-acid polypeptide reads, in one-letter code: MNIKPLADRVLILPAPAEEKTIGGIIIPDTAKEKPLKGEVVAVGHGTKDEEMVLKVGDTVLYGKYAGTELEVEGTKYLIMRQSDVLAILG.

Belongs to the GroES chaperonin family. Heptamer of 7 subunits arranged in a ring. Interacts with the chaperonin GroEL.

The protein resides in the cytoplasm. Functionally, together with the chaperonin GroEL, plays an essential role in assisting protein folding. The GroEL-GroES system forms a nano-cage that allows encapsulation of the non-native substrate proteins and provides a physical environment optimized to promote and accelerate protein folding. GroES binds to the apical surface of the GroEL ring, thereby capping the opening of the GroEL channel. The sequence is that of Co-chaperonin GroES from Bacteroides thetaiotaomicron (strain ATCC 29148 / DSM 2079 / JCM 5827 / CCUG 10774 / NCTC 10582 / VPI-5482 / E50).